The sequence spans 253 residues: Ribosomal RNA small subunit methyltransferase A (253 aa).

6 residues coordinate S-adenosyl-L-methionine: histidine 12, leucine 14, glycine 39, glutamate 60, aspartate 81, and asparagine 104.

The protein belongs to the class I-like SAM-binding methyltransferase superfamily. rRNA adenine N(6)-methyltransferase family. RsmA subfamily.

The protein resides in the cytoplasm. The enzyme catalyses adenosine(1518)/adenosine(1519) in 16S rRNA + 4 S-adenosyl-L-methionine = N(6)-dimethyladenosine(1518)/N(6)-dimethyladenosine(1519) in 16S rRNA + 4 S-adenosyl-L-homocysteine + 4 H(+). Its function is as follows. Specifically dimethylates two adjacent adenosines (A1518 and A1519) in the loop of a conserved hairpin near the 3'-end of 16S rRNA in the 30S particle. May play a critical role in biogenesis of 30S subunits. This is Ribosomal RNA small subunit methyltransferase A from Acidovorax ebreus (strain TPSY) (Diaphorobacter sp. (strain TPSY)).